We begin with the raw amino-acid sequence, 498 residues long: Probable malate:quinone oxidoreductase (498 aa).

Belongs to the MQO family. FAD is required as a cofactor.

The enzyme catalyses (S)-malate + a quinone = a quinol + oxaloacetate. Its pathway is carbohydrate metabolism; tricarboxylic acid cycle; oxaloacetate from (S)-malate (quinone route): step 1/1. The sequence is that of Probable malate:quinone oxidoreductase from Prochlorococcus marinus (strain MIT 9312).